A 436-amino-acid polypeptide reads, in one-letter code: Xylose isomerase (436 aa).

Active-site residues include histidine 100 and aspartate 103. 7 residues coordinate Mg(2+): glutamate 231, glutamate 267, histidine 270, aspartate 295, aspartate 306, aspartate 308, and aspartate 338.

The protein belongs to the xylose isomerase family. In terms of assembly, homotetramer. Mg(2+) is required as a cofactor.

The protein resides in the cytoplasm. It catalyses the reaction alpha-D-xylose = alpha-D-xylulofuranose. This chain is Xylose isomerase, found in Ruegeria sp. (strain TM1040) (Silicibacter sp.).